We begin with the raw amino-acid sequence, 233 residues long: Sugar fermentation stimulation protein homolog (233 aa).

This sequence belongs to the SfsA family.

This Pyrobaculum neutrophilum (strain DSM 2338 / JCM 9278 / NBRC 100436 / V24Sta) (Thermoproteus neutrophilus) protein is Sugar fermentation stimulation protein homolog.